A 265-amino-acid chain; its full sequence is Mlc titration factor A (265 aa).

Zn(2+) contacts are provided by H111, H148, H152, and E211.

This sequence belongs to the MtfA family. Interacts with Mlc. Requires Zn(2+) as cofactor.

The protein resides in the cytoplasm. Involved in the modulation of the activity of the glucose-phosphotransferase system (glucose-PTS). Interacts with the transcriptional repressor Mlc, preventing its interaction with DNA and leading to the modulation of expression of genes regulated by Mlc, including ptsG, which encodes the PTS system glucose-specific EIICB component. In terms of biological role, shows zinc-dependent metallopeptidase activity. This Klebsiella pneumoniae (strain 342) protein is Mlc titration factor A.